A 64-amino-acid chain; its full sequence is Defensin-like protein 123 (64 aa).

4 cysteine pairs are disulfide-bonded: Cys19/Cys62, Cys29/Cys49, Cys34/Cys56, and Cys38/Cys58.

The protein belongs to the DEFL family.

The protein is Defensin-like protein 123 of Arabidopsis thaliana (Mouse-ear cress).